The chain runs to 218 residues: Peptide methionine sulfoxide reductase MsrA (218 aa).

The active site involves cysteine 57.

Belongs to the MsrA Met sulfoxide reductase family.

It carries out the reaction L-methionyl-[protein] + [thioredoxin]-disulfide + H2O = L-methionyl-(S)-S-oxide-[protein] + [thioredoxin]-dithiol. It catalyses the reaction [thioredoxin]-disulfide + L-methionine + H2O = L-methionine (S)-S-oxide + [thioredoxin]-dithiol. Its function is as follows. Has an important function as a repair enzyme for proteins that have been inactivated by oxidation. Catalyzes the reversible oxidation-reduction of methionine sulfoxide in proteins to methionine. This is Peptide methionine sulfoxide reductase MsrA from Brucella melitensis biotype 2 (strain ATCC 23457).